The following is a 282-amino-acid chain: Elongation factor Ts (282 aa).

The segment at 80–83 is involved in Mg(2+) ion dislocation from EF-Tu; the sequence is TDFV.

This sequence belongs to the EF-Ts family.

The protein localises to the cytoplasm. Its function is as follows. Associates with the EF-Tu.GDP complex and induces the exchange of GDP to GTP. It remains bound to the aminoacyl-tRNA.EF-Tu.GTP complex up to the GTP hydrolysis stage on the ribosome. This is Elongation factor Ts from Protochlamydia amoebophila (strain UWE25).